We begin with the raw amino-acid sequence, 470 residues long: Light-independent protochlorophyllide reductase subunit N (470 aa).

[4Fe-4S] cluster contacts are provided by Cys-23, Cys-48, and Cys-108.

This sequence belongs to the BchN/ChlN family. As to quaternary structure, protochlorophyllide reductase is composed of three subunits; ChlL, ChlN and ChlB. Forms a heterotetramer of two ChlB and two ChlN subunits. The cofactor is [4Fe-4S] cluster.

It is found in the plastid. Its subcellular location is the chloroplast. The catalysed reaction is chlorophyllide a + oxidized 2[4Fe-4S]-[ferredoxin] + 2 ADP + 2 phosphate = protochlorophyllide a + reduced 2[4Fe-4S]-[ferredoxin] + 2 ATP + 2 H2O. It functions in the pathway porphyrin-containing compound metabolism; chlorophyll biosynthesis (light-independent). In terms of biological role, component of the dark-operative protochlorophyllide reductase (DPOR) that uses Mg-ATP and reduced ferredoxin to reduce ring D of protochlorophyllide (Pchlide) to form chlorophyllide a (Chlide). This reaction is light-independent. The NB-protein (ChlN-ChlB) is the catalytic component of the complex. The protein is Light-independent protochlorophyllide reductase subunit N of Zygnema circumcarinatum (Green alga).